The following is a 326-amino-acid chain: MANFTDAASLQQFDELLKNNSKSLTVVHFHAPWAPQCSQMNDVMAELAKEHKHTMFVKLEAEAVPEVSEKYEITSVPTFLFFKGGEKIDRLDGAHAPELTNKVQRLGSGGGGAVGAGDVPKEDLNQRLKRLINAAPCMLFMKGSPQEPRCGFSRQIIQILKDHNVQYSSFDILSDEEVRQGLKTYSNWPTYPQVYVSGELIGGLDIVKELVESGELENTFPKTVSLENRLKSLINKSPVMLFMKGNKEAAKCGFSRQILEIMNNTGVEYDTFDILEDEEVRQGLKTYSNWPTFPQLYVKGDLIGGLDIVKELLEGGELVSVLKGEN.

A Thioredoxin domain is found at Met-1–Ser-108. 2 consecutive Glutaredoxin domains span residues Asn-125–Glu-227 and Glu-227–Asn-326. Residues Cys-150 and Cys-252 each contribute to the [2Fe-2S] cluster site.

In terms of assembly, homodimer; the homodimer is independent of 2Fe-2S clusters. Heterotrimer; forms a heterotrimeric complex composed by two bola2 molecules and one glrx3 molecule; linked by [2Fe-2S] clusters.

The protein resides in the cytoplasm. It is found in the cytosol. Together with bola2, acts as a cytosolic iron-sulfur (Fe-S) cluster assembly factor that facilitates [2Fe-2S] cluster insertion into a subset of cytosolic proteins. Required for hemoglobin maturation. Does not possess any thyoredoxin activity since it lacks the conserved motif that is essential for catalytic activity. This is Glutaredoxin 3 (glrx3) from Danio rerio (Zebrafish).